Here is a 350-residue protein sequence, read N- to C-terminus: tRNA uridine(34) hydroxylase (350 aa).

The Rhodanese domain occupies 146–240; sequence DDPDTLFVDM…YARKAKEQGL (95 aa). Cys-200 functions as the Cysteine persulfide intermediate in the catalytic mechanism.

This sequence belongs to the TrhO family.

The enzyme catalyses uridine(34) in tRNA + AH2 + O2 = 5-hydroxyuridine(34) in tRNA + A + H2O. In terms of biological role, catalyzes oxygen-dependent 5-hydroxyuridine (ho5U) modification at position 34 in tRNAs. This chain is tRNA uridine(34) hydroxylase, found in Yersinia enterocolitica serotype O:8 / biotype 1B (strain NCTC 13174 / 8081).